We begin with the raw amino-acid sequence, 155 residues long: Endoribonuclease YbeY (155 aa).

Positions 114, 118, and 124 each coordinate Zn(2+).

Belongs to the endoribonuclease YbeY family. It depends on Zn(2+) as a cofactor.

It is found in the cytoplasm. Single strand-specific metallo-endoribonuclease involved in late-stage 70S ribosome quality control and in maturation of the 3' terminus of the 16S rRNA. This Proteus mirabilis (strain HI4320) protein is Endoribonuclease YbeY.